Reading from the N-terminus, the 123-residue chain is Large ribosomal subunit protein uL29 (123 aa).

It belongs to the universal ribosomal protein uL29 family. Component of the large ribosomal subunit.

The protein localises to the cytoplasm. Its function is as follows. Component of the large ribosomal subunit. The ribosome is a large ribonucleoprotein complex responsible for the synthesis of proteins in the cell. Plays an essential role in early embryonic development. May act as a haploinsufficient tumor suppressor. The chain is Large ribosomal subunit protein uL29 (rpl35) from Danio rerio (Zebrafish).